Consider the following 349-residue polypeptide: tRNA pseudouridine synthase D (349 aa).

Substrate is bound at residue phenylalanine 27. Residue aspartate 80 is the Nucleophile of the active site. Asparagine 129 lines the substrate pocket. A TRUD domain is found at 155-303 (GVPNYFGAQR…VEAARRAMLL (149 aa)). Phenylalanine 329 serves as a coordination point for substrate.

The protein belongs to the pseudouridine synthase TruD family.

It catalyses the reaction uridine(13) in tRNA = pseudouridine(13) in tRNA. Responsible for synthesis of pseudouridine from uracil-13 in transfer RNAs. The chain is tRNA pseudouridine synthase D from Shigella sonnei (strain Ss046).